The primary structure comprises 276 residues: Large ribosomal subunit protein uL2 (276 aa).

The segment at 226–276 (MNSVDHPHGGGEGKTSGGRHPVSPWGTPTKGYKTRSNKRTDKLILRHRNKG) is disordered.

The protein belongs to the universal ribosomal protein uL2 family. As to quaternary structure, part of the 50S ribosomal subunit. Forms a bridge to the 30S subunit in the 70S ribosome.

In terms of biological role, one of the primary rRNA binding proteins. Required for association of the 30S and 50S subunits to form the 70S ribosome, for tRNA binding and peptide bond formation. It has been suggested to have peptidyltransferase activity; this is somewhat controversial. Makes several contacts with the 16S rRNA in the 70S ribosome. This chain is Large ribosomal subunit protein uL2, found in Vesicomyosocius okutanii subsp. Calyptogena okutanii (strain HA).